The primary structure comprises 339 residues: Pyrimidine monooxygenase RutA (339 aa).

Residues 26–27 (IK), asparagine 92, glutamate 101, 117–118 (RY), and serine 167 contribute to the FMN site.

It belongs to the NtaA/SnaA/DszA monooxygenase family. RutA subfamily.

It catalyses the reaction uracil + FMNH2 + NADH + O2 = (Z)-3-ureidoacrylate + FMN + NAD(+) + H2O + H(+). The enzyme catalyses thymine + FMNH2 + NADH + O2 = (Z)-2-methylureidoacrylate + FMN + NAD(+) + H2O + H(+). Functionally, catalyzes the pyrimidine ring opening between N-3 and C-4 by an unusual flavin hydroperoxide-catalyzed mechanism, adding oxygen atoms in the process to yield ureidoacrylate peracid, that immediately reacts with FMN forming ureidoacrylate and FMN-N(5)-oxide. The FMN-N(5)-oxide reacts spontaneously with NADH to produce FMN. Requires the flavin reductase RutF to regenerate FMN in vivo. The chain is Pyrimidine monooxygenase RutA from Cronobacter sakazakii (strain ATCC BAA-894) (Enterobacter sakazakii).